The sequence spans 255 residues: Triosephosphate isomerase (255 aa).

9–11 (NWK) is a binding site for substrate. Residue His95 is the Electrophile of the active site. Glu167 (proton acceptor) is an active-site residue. Substrate-binding positions include Gly173, Ser212, and 233–234 (GG).

Belongs to the triosephosphate isomerase family. As to quaternary structure, homodimer.

It localises to the cytoplasm. The enzyme catalyses D-glyceraldehyde 3-phosphate = dihydroxyacetone phosphate. It participates in carbohydrate biosynthesis; gluconeogenesis. Its pathway is carbohydrate degradation; glycolysis; D-glyceraldehyde 3-phosphate from glycerone phosphate: step 1/1. Functionally, involved in the gluconeogenesis. Catalyzes stereospecifically the conversion of dihydroxyacetone phosphate (DHAP) to D-glyceraldehyde-3-phosphate (G3P). This is Triosephosphate isomerase from Pectobacterium atrosepticum (strain SCRI 1043 / ATCC BAA-672) (Erwinia carotovora subsp. atroseptica).